We begin with the raw amino-acid sequence, 506 residues long: Galactose/methyl galactoside import ATP-binding protein MglA (506 aa).

2 ABC transporter domains span residues leucine 14–serine 249 and valine 264–leucine 506. Glycine 46–serine 53 provides a ligand contact to ATP.

Belongs to the ABC transporter superfamily. Galactose/methyl galactoside importer (TC 3.A.1.2.3) family. In terms of assembly, the complex is composed of one ATP-binding protein (MglA), two transmembrane proteins (MglC) and a solute-binding protein (MglB).

It is found in the cell inner membrane. The enzyme catalyses D-galactose(out) + ATP + H2O = D-galactose(in) + ADP + phosphate + H(+). The catalysed reaction is methyl beta-D-galactoside(out) + ATP + H2O = methyl beta-D-galactoside(in) + ADP + phosphate + H(+). In terms of biological role, part of the ABC transporter complex MglABC involved in galactose/methyl galactoside import. Responsible for energy coupling to the transport system. The chain is Galactose/methyl galactoside import ATP-binding protein MglA from Escherichia coli O6:K15:H31 (strain 536 / UPEC).